Here is a 365-residue protein sequence, read N- to C-terminus: tRNA-specific 2-thiouridylase MnmA (365 aa).

Residues 14–21 (AMSGGVDS) and Leu-40 contribute to the ATP site. Cys-108 serves as the catalytic Nucleophile. An intrachain disulfide couples Cys-108 to Cys-204. Gly-132 contacts ATP. An interaction with tRNA region spans residues 154 to 156 (KDQ). The Cysteine persulfide intermediate role is filled by Cys-204.

It belongs to the MnmA/TRMU family.

The protein resides in the cytoplasm. It carries out the reaction S-sulfanyl-L-cysteinyl-[protein] + uridine(34) in tRNA + AH2 + ATP = 2-thiouridine(34) in tRNA + L-cysteinyl-[protein] + A + AMP + diphosphate + H(+). Its function is as follows. Catalyzes the 2-thiolation of uridine at the wobble position (U34) of tRNA, leading to the formation of s(2)U34. This chain is tRNA-specific 2-thiouridylase MnmA, found in Rickettsia massiliae (strain Mtu5).